A 217-amino-acid polypeptide reads, in one-letter code: uncharacterized protein (217 aa).

In terms of domain architecture, ABC transporter spans leucine 2–leucine 216. Residue glycine 34 to serine 41 coordinates ATP.

It belongs to the ABC transporter superfamily.

Its function is as follows. Probably part of a binding-protein-dependent transport system YnjCD. Probably responsible for energy coupling to the transport system. This is an uncharacterized protein from Escherichia coli (strain K12).